Reading from the N-terminus, the 344-residue chain is S-methyl-5'-thioadenosine phosphorylase (344 aa).

Residues Thr-51, 99-100 (RH), and 132-133 (SA) contribute to the phosphate site. Met-234 serves as a coordination point for substrate. A phosphate-binding site is contributed by Ser-235. Residue 258–260 (DYD) participates in substrate binding.

This sequence belongs to the PNP/MTAP phosphorylase family. MTAP subfamily. In terms of assembly, homotrimer.

The protein resides in the cytoplasm. It localises to the nucleus. It carries out the reaction S-methyl-5'-thioadenosine + phosphate = 5-(methylsulfanyl)-alpha-D-ribose 1-phosphate + adenine. It participates in amino-acid biosynthesis; L-methionine biosynthesis via salvage pathway; S-methyl-5-thio-alpha-D-ribose 1-phosphate from S-methyl-5'-thioadenosine (phosphorylase route): step 1/1. Its function is as follows. Catalyzes the reversible phosphorylation of S-methyl-5'-thioadenosine (MTA) to adenine and 5-methylthioribose-1-phosphate. Involved in the breakdown of MTA, a major by-product of polyamine biosynthesis. Responsible for the first step in the methionine salvage pathway after MTA has been generated from S-adenosylmethionine. Has broad substrate specificity with 6-aminopurine nucleosides as preferred substrates. This is S-methyl-5'-thioadenosine phosphorylase from Phaeosphaeria nodorum (strain SN15 / ATCC MYA-4574 / FGSC 10173) (Glume blotch fungus).